Reading from the N-terminus, the 949-residue chain is Sensor histidine kinase RcsC (949 aa).

Residues 1–19 (MKYLASFRTTLKASRYMFR) are Cytoplasmic-facing. The chain crosses the membrane as a helical span at residues 20-41 (ALALVLWLLIAFSSVFYIVNAL). Residues 42-313 (HQRESEIRQE…PVDKVLERIR (272 aa)) lie on the Periplasmic side of the membrane. A helical membrane pass occupies residues 314-335 (MVILNAILLNVLAGAALFTLAR). Over 336–949 (MYERRIFIPA…AERVRKSRES (614 aa)) the chain is Cytoplasmic. The region spanning 357–425 (QFNRKIVASA…VLTSNNTNLQ (69 aa)) is the PAS domain. Residues 476-692 (TVSHELRTPL…QFTVRIPLYG (217 aa)) enclose the Histidine kinase domain. At H479 the chain carries Phosphohistidine; by autocatalysis. Residues 705–805 (SGKRCWLAVR…ARIYLIEMES (101 aa)) form the ABL domain. Residues 826-940 (MILVVDDHPI…VIKQTLTVYA (115 aa)) enclose the Response regulatory domain. D875 is subject to 4-aspartylphosphate.

The protein belongs to the RcsC family. Interacts with RcsD. Autophosphorylated. Activation probably requires a transfer of a phosphate group from a His in the transmitter domain to an Asp in the receiver domain.

The protein resides in the cell inner membrane. It carries out the reaction ATP + protein L-histidine = ADP + protein N-phospho-L-histidine.. Component of the Rcs signaling system, which controls transcription of numerous genes. RcsC functions as a membrane-associated protein kinase that phosphorylates RcsD in response to environmental signals. The phosphoryl group is then transferred to the response regulator RcsB. Involved in regulation of K30 capsular polysaccharide synthesis. The protein is Sensor histidine kinase RcsC of Escherichia coli.